We begin with the raw amino-acid sequence, 161 residues long: Probable ubiquitin-conjugating enzyme E2 17 (161 aa).

The region spanning Ile-15–Val-161 is the UBC core domain. The active-site Glycyl thioester intermediate is Cys-99.

This sequence belongs to the ubiquitin-conjugating enzyme family.

It catalyses the reaction S-ubiquitinyl-[E1 ubiquitin-activating enzyme]-L-cysteine + [E2 ubiquitin-conjugating enzyme]-L-cysteine = [E1 ubiquitin-activating enzyme]-L-cysteine + S-ubiquitinyl-[E2 ubiquitin-conjugating enzyme]-L-cysteine.. It participates in protein modification; protein ubiquitination. Its function is as follows. Accepts the ubiquitin from the E1 complex and catalyzes its covalent attachment to other proteins. In Arabidopsis thaliana (Mouse-ear cress), this protein is Probable ubiquitin-conjugating enzyme E2 17 (UBC17).